A 366-amino-acid polypeptide reads, in one-letter code: Glucose 1-dehydrogenase (366 aa).

Cysteine 39 provides a ligand contact to Zn(2+). Threonine 41 contacts substrate. Residues histidine 66 and glutamate 67 each contribute to the Zn(2+) site. Asparagine 89 is a substrate binding site. Zn(2+)-binding residues include cysteine 93, cysteine 96, cysteine 99, and cysteine 107. The substrate site is built by glutamate 114, glutamine 150, and aspartate 154. Glutamine 150 contacts Zn(2+). Residues 189 to 192 (TGPI), 211 to 213 (NRR), 277 to 279 (FGF), 305 to 307 (LVN), and lysine 354 each bind NADP(+). Asparagine 307 contributes to the substrate binding site.

Belongs to the zinc-containing alcohol dehydrogenase family. Glucose 1-dehydrogenase subfamily. Homotetramer. Requires Zn(2+) as cofactor.

It catalyses the reaction D-glucose + NAD(+) = D-glucono-1,5-lactone + NADH + H(+). The catalysed reaction is D-glucose + NADP(+) = D-glucono-1,5-lactone + NADPH + H(+). The enzyme catalyses D-galactose + NAD(+) = D-galactono-1,4-lactone + NADH + H(+). It carries out the reaction D-galactose + NADP(+) = D-galactono-1,5-lactone + NADPH + H(+). It catalyses the reaction an aldopyranose + NAD(+) = aldono-1,5-lactone + NADH + H(+). The catalysed reaction is an aldopyranose + NADP(+) = aldono-1,5-lactone + NADPH + H(+). Its activity is regulated as follows. Inhibited by EDTA in vitro. Its function is as follows. Catalyzes the NAD(P)(+)-dependent oxidation of D-glucose to D-gluconate via gluconolactone. Displays broad substrate specificity since it is able to catalyze the oxidation of a number of alternative aldose sugars, such as D-galactose, D-xylose and L-arabinose, to the corresponding glyconate. Can utilize both NAD(+) and NADP(+) as electron acceptor. Physiologically, seems to be involved in the degradation of both glucose and galactose through a non-phosphorylative variant of the Entner-Doudoroff pathway. The protein is Glucose 1-dehydrogenase of Saccharolobus solfataricus (Sulfolobus solfataricus).